Consider the following 332-residue polypeptide: Ketol-acid reductoisomerase (NADP(+)) (332 aa).

In terms of domain architecture, KARI N-terminal Rossmann spans 2–182; sequence AKIYTDKDVS…GATRAGVIET (181 aa). NADP(+) is bound by residues 25–28, serine 53, and 83–86; these read YGSQ and DMIQ. Histidine 108 is a catalytic residue. Position 134 (glycine 134) interacts with NADP(+). Residues 183–328 enclose the KARI C-terminal knotted domain; the sequence is TFKEETETDL…RSLRDIILRG (146 aa). Residues aspartate 191, glutamate 195, glutamate 227, and glutamate 231 each contribute to the Mg(2+) site. Position 252 (serine 252) interacts with substrate.

It belongs to the ketol-acid reductoisomerase family. The cofactor is Mg(2+).

It carries out the reaction (2R)-2,3-dihydroxy-3-methylbutanoate + NADP(+) = (2S)-2-acetolactate + NADPH + H(+). The enzyme catalyses (2R,3R)-2,3-dihydroxy-3-methylpentanoate + NADP(+) = (S)-2-ethyl-2-hydroxy-3-oxobutanoate + NADPH + H(+). It participates in amino-acid biosynthesis; L-isoleucine biosynthesis; L-isoleucine from 2-oxobutanoate: step 2/4. Its pathway is amino-acid biosynthesis; L-valine biosynthesis; L-valine from pyruvate: step 2/4. Involved in the biosynthesis of branched-chain amino acids (BCAA). Catalyzes an alkyl-migration followed by a ketol-acid reduction of (S)-2-acetolactate (S2AL) to yield (R)-2,3-dihydroxy-isovalerate. In the isomerase reaction, S2AL is rearranged via a Mg-dependent methyl migration to produce 3-hydroxy-3-methyl-2-ketobutyrate (HMKB). In the reductase reaction, this 2-ketoacid undergoes a metal-dependent reduction by NADPH to yield (R)-2,3-dihydroxy-isovalerate. The protein is Ketol-acid reductoisomerase (NADP(+)) of Sulfolobus acidocaldarius (strain ATCC 33909 / DSM 639 / JCM 8929 / NBRC 15157 / NCIMB 11770).